We begin with the raw amino-acid sequence, 493 residues long: MASKATLLLAFTLLFATCIARHQQRQQQQNQCQLQNIEALEPIEVIQAEAGVTEIWDAYDQQFQCAWSILFDTGFNLVAFSCLPTSTPLFWPSSREGVILPGCRRTYEYSQEQQFSGEGGRRGGGEGTFRTVIRKLENLKEGDVVAIPTGTAHWLHNDGNTELVVVFLDTQNHENQLDENQRRFFLAGNPQAQAQSQQQQQRQPRQQSPQRQRQRQRQGQGQNAGNIFNGFTPELIAQSFNVDQETAQKLQGQNDQRGHIVNVGQDLQIVRPPQDRRSPRQQQEQATSPRQQQEQQQGRRGGWSNGVEETICSMKFKVNIDNPSQADFVNPQAGSIANLNSFKFPILEHLRLSVERGELRPNAIQSPHWTINAHNLLYVTEGALRVQIVDNQGNSVFDNELREGQVVVIPQNFAVIKRANEQGSRWVSFKTNDNAMIANLAGRVSASAASPLTLWANRYQLSREEAQQLKFSQRETVLFAPSFSRGQGIRASR.

Positions 1 to 20 are cleaved as a signal peptide; the sequence is MASKATLLLAFTLLFATCIA. 2 cysteine pairs are disulfide-bonded: cysteine 32–cysteine 65 and cysteine 103–cysteine 312. In terms of domain architecture, Cupin type-1 1 spans 37–248; that stretch reads IEALEPIEVI…SFNVDQETAQ (212 aa). Disordered stretches follow at residues 190-229 and 269-305; these read PQAQ…NIFN and IVRP…GWSN. 2 stretches are compositionally biased toward low complexity: residues 191-221 and 280-298; these read QAQA…QGQG and RQQQ…QQQG. The Cupin type-1 2 domain occupies 318 to 467; that stretch reads VNIDNPSQAD…RYQLSREEAQ (150 aa).

It belongs to the 11S seed storage protein (globulins) family. Hexamer; each subunit is composed of an acidic and a basic chain derived from a single precursor and linked by a disulfide bond.

In terms of biological role, this is a seed storage protein. This chain is 11S globulin seed storage protein G3 (HAG3), found in Helianthus annuus (Common sunflower).